We begin with the raw amino-acid sequence, 347 residues long: Peroxidase C2 (347 aa).

The first 24 residues, 1 to 24 (MHSSSSLIKLGFLLLLLNVSLSHA), serve as a signal peptide directing secretion. 4 cysteine pairs are disulfide-bonded: Cys-35–Cys-115, Cys-68–Cys-73, Cys-121–Cys-325, and Cys-201–Cys-233. The Proton acceptor role is filled by His-66. Residues Asp-67, Val-70, Gly-72, Asp-74, and Ser-76 each coordinate Ca(2+). Asn-81 carries an N-linked (GlcNAc...) asparagine glycan. Position 163 (Pro-163) interacts with substrate. His-194 is a binding site for heme b. Thr-195 lines the Ca(2+) pocket. Residues Asn-210 and Asn-238 are each glycosylated (N-linked (GlcNAc...) asparagine). Ca(2+) contacts are provided by Asp-246, Thr-249, and Asp-254.

This sequence belongs to the peroxidase family. Classical plant (class III) peroxidase subfamily. It depends on Ca(2+) as a cofactor. The cofactor is heme b.

It is found in the secreted. The protein resides in the vacuole. It catalyses the reaction 2 a phenolic donor + H2O2 = 2 a phenolic radical donor + 2 H2O. In terms of biological role, removal of H(2)O(2), oxidation of toxic reductants, biosynthesis and degradation of lignin, suberization, auxin catabolism, response to environmental stresses such as wounding, pathogen attack and oxidative stress. These functions might be dependent on each isozyme/isoform in each plant tissue. The protein is Peroxidase C2 (PRXC2) of Armoracia rusticana (Horseradish).